A 509-amino-acid chain; its full sequence is Aspartyl/glutamyl-tRNA(Asn/Gln) amidotransferase subunit B (509 aa).

It belongs to the GatB/GatE family. GatB subfamily. As to quaternary structure, heterotrimer of A, B and C subunits.

The catalysed reaction is L-glutamyl-tRNA(Gln) + L-glutamine + ATP + H2O = L-glutaminyl-tRNA(Gln) + L-glutamate + ADP + phosphate + H(+). It catalyses the reaction L-aspartyl-tRNA(Asn) + L-glutamine + ATP + H2O = L-asparaginyl-tRNA(Asn) + L-glutamate + ADP + phosphate + 2 H(+). Its function is as follows. Allows the formation of correctly charged Asn-tRNA(Asn) or Gln-tRNA(Gln) through the transamidation of misacylated Asp-tRNA(Asn) or Glu-tRNA(Gln) in organisms which lack either or both of asparaginyl-tRNA or glutaminyl-tRNA synthetases. The reaction takes place in the presence of glutamine and ATP through an activated phospho-Asp-tRNA(Asn) or phospho-Glu-tRNA(Gln). The sequence is that of Aspartyl/glutamyl-tRNA(Asn/Gln) amidotransferase subunit B from Mycobacterium leprae (strain Br4923).